The sequence spans 253 residues: 5'/3'-nucleotidase SurE (253 aa).

Aspartate 8, aspartate 9, serine 39, and asparagine 92 together coordinate a divalent metal cation.

The protein belongs to the SurE nucleotidase family. Requires a divalent metal cation as cofactor.

The protein localises to the cytoplasm. The enzyme catalyses a ribonucleoside 5'-phosphate + H2O = a ribonucleoside + phosphate. The catalysed reaction is a ribonucleoside 3'-phosphate + H2O = a ribonucleoside + phosphate. It carries out the reaction [phosphate](n) + H2O = [phosphate](n-1) + phosphate + H(+). Its function is as follows. Nucleotidase with a broad substrate specificity as it can dephosphorylate various ribo- and deoxyribonucleoside 5'-monophosphates and ribonucleoside 3'-monophosphates with highest affinity to 3'-AMP. Also hydrolyzes polyphosphate (exopolyphosphatase activity) with the preference for short-chain-length substrates (P20-25). Might be involved in the regulation of dNTP and NTP pools, and in the turnover of 3'-mononucleotides produced by numerous intracellular RNases (T1, T2, and F) during the degradation of various RNAs. This is 5'/3'-nucleotidase SurE from Escherichia fergusonii (strain ATCC 35469 / DSM 13698 / CCUG 18766 / IAM 14443 / JCM 21226 / LMG 7866 / NBRC 102419 / NCTC 12128 / CDC 0568-73).